A 302-amino-acid polypeptide reads, in one-letter code: GATA transcription factor 28 (302 aa).

Residues 47–66 (NAGGMSEGVETDIPSHPGNV) form a disordered region. The region spanning 77 to 112 (GSEQGDQLTLSFQGQVYVFDSVLPEKVQAVLLLLGG) is the Tify domain. A disordered region spans residues 119–141 (APPGLGSPHQNNRVSSLPGTPQR). Polar residues predominate over residues 126 to 141 (PHQNNRVSSLPGTPQR). Positions 147–189 (RLASLVRFREKRKGRNFDKKIRYTVRKEVALRMQRNKGQFTSA) constitute a CCT domain. The GATA-type zinc finger occupies 217–273 (QHQEISCRHCGIGEKSTPMMRRGPAGPRTLCNACGLMWANKGAFRDLSKASPQTAQN).

Belongs to the type IV zinc-finger family. Class C subfamily. Predominantly expressed in shoot apices, inflorescences and roots.

It is found in the nucleus. Its function is as follows. Transcriptional activator that specifically binds 5'-GATA-3' or 5'-GAT-3' motifs within gene promoters. This is GATA transcription factor 28 (GATA28) from Arabidopsis thaliana (Mouse-ear cress).